The sequence spans 106 residues: Large ribosomal subunit protein uL24 (106 aa).

The protein belongs to the universal ribosomal protein uL24 family. Part of the 50S ribosomal subunit.

Its function is as follows. One of two assembly initiator proteins, it binds directly to the 5'-end of the 23S rRNA, where it nucleates assembly of the 50S subunit. Functionally, one of the proteins that surrounds the polypeptide exit tunnel on the outside of the subunit. This Delftia acidovorans (strain DSM 14801 / SPH-1) protein is Large ribosomal subunit protein uL24.